The primary structure comprises 667 residues: Trifunctional UDP-glucose 4,6-dehydratase/UDP-4-keto-6-deoxy-D-glucose 3,5-epimerase/UDP-4-keto-L-rhamnose-reductase RHM2 (667 aa).

Position 15-21 (15-21 (GAAGFIA)) interacts with NAD(+). Threonine 134 is a binding site for substrate. Aspartate 135 (proton donor) is an active-site residue. Residues glutamate 136 and tyrosine 161 each act as proton acceptor in the active site. 389–395 (GKTGWLG) contributes to the NADP(+) binding site.

It in the N-terminal section; belongs to the NAD(P)-dependent epimerase/dehydratase family. dTDP-glucose dehydratase subfamily. In the C-terminal section; belongs to the dTDP-4-dehydrorhamnose reductase family. Requires NAD(+) as cofactor. The cofactor is NADP(+). Expressed in roots, stems, leaves, seedlings, inflorescence tips, and siliques.

It catalyses the reaction UDP-alpha-D-glucose = UDP-4-dehydro-6-deoxy-alpha-D-glucose + H2O. It functions in the pathway carbohydrate biosynthesis. Trifunctional enzyme involved in UDP-beta-L-rhamnose biosynthesis, a precursor of the primary cell wall components rhamnogalacturonan I (RG-I) and rhamnogalacturonan II (RG-II). Catalyzes the dehydration of UDP-glucose to form UDP-4-dehydro-6-deoxy-D-glucose followed by the epimerization of the C3' and C5' positions of UDP-4-dehydro-6-deoxy-D-glucose to form UDP-4-keto-beta-L-rhamnose and the reduction of UDP-4-keto-beta-L-rhamnose to yield UDP-beta-L-rhamnose. Required for the normal seed coat epidermal development. This chain is Trifunctional UDP-glucose 4,6-dehydratase/UDP-4-keto-6-deoxy-D-glucose 3,5-epimerase/UDP-4-keto-L-rhamnose-reductase RHM2, found in Arabidopsis thaliana (Mouse-ear cress).